The sequence spans 466 residues: Ribulose bisphosphate carboxylase large chain (466 aa).

Lys5 bears the N6,N6,N6-trimethyllysine mark. Asn114 and Thr164 together coordinate substrate. Lys166 acts as the Proton acceptor in catalysis. Residue Lys168 participates in substrate binding. Mg(2+) contacts are provided by Lys192, Asp194, and Glu195. Residue Lys192 is modified to N6-carboxylysine. Residue His285 is the Proton acceptor of the active site. The substrate site is built by Arg286, His318, and Ser370.

Belongs to the RuBisCO large chain family. Type I subfamily. Heterohexadecamer of 8 large chains and 8 small chains; disulfide-linked. The disulfide link is formed within the large subunit homodimers. Mg(2+) is required as a cofactor. The disulfide bond which can form in the large chain dimeric partners within the hexadecamer appears to be associated with oxidative stress and protein turnover.

The protein localises to the plastid. It is found in the chloroplast. It catalyses the reaction 2 (2R)-3-phosphoglycerate + 2 H(+) = D-ribulose 1,5-bisphosphate + CO2 + H2O. The enzyme catalyses D-ribulose 1,5-bisphosphate + O2 = 2-phosphoglycolate + (2R)-3-phosphoglycerate + 2 H(+). RuBisCO catalyzes two reactions: the carboxylation of D-ribulose 1,5-bisphosphate, the primary event in carbon dioxide fixation, as well as the oxidative fragmentation of the pentose substrate in the photorespiration process. Both reactions occur simultaneously and in competition at the same active site. The protein is Ribulose bisphosphate carboxylase large chain of Aesculus pavia (Red buckeye).